Reading from the N-terminus, the 459-residue chain is UDP-N-acetylmuramate--L-alanine ligase (459 aa).

Residue 118–124 participates in ATP binding; sequence GTHGKTT.

This sequence belongs to the MurCDEF family.

The protein localises to the cytoplasm. The enzyme catalyses UDP-N-acetyl-alpha-D-muramate + L-alanine + ATP = UDP-N-acetyl-alpha-D-muramoyl-L-alanine + ADP + phosphate + H(+). It functions in the pathway cell wall biogenesis; peptidoglycan biosynthesis. Cell wall formation. This Lachnospira eligens (strain ATCC 27750 / DSM 3376 / VPI C15-48 / C15-B4) (Eubacterium eligens) protein is UDP-N-acetylmuramate--L-alanine ligase.